A 496-amino-acid polypeptide reads, in one-letter code: Cobyric acid synthase (496 aa).

Residues 256–444 (KINIAVVLLR…IHGILDNQAF (189 aa)) form the GATase cobBQ-type domain. The active-site Nucleophile is the cysteine 337. The active site involves histidine 436.

It belongs to the CobB/CobQ family. CobQ subfamily.

It participates in cofactor biosynthesis; adenosylcobalamin biosynthesis. Catalyzes amidations at positions B, D, E, and G on adenosylcobyrinic A,C-diamide. NH(2) groups are provided by glutamine, and one molecule of ATP is hydrogenolyzed for each amidation. This is Cobyric acid synthase from Phocaeicola vulgatus (strain ATCC 8482 / DSM 1447 / JCM 5826 / CCUG 4940 / NBRC 14291 / NCTC 11154) (Bacteroides vulgatus).